Consider the following 395-residue polypeptide: Cysteine synthase 2 (395 aa).

Residues 6–22 (QDLASGIAMGAVFMYLL) form a helical membrane-spanning segment. Lys-83 is subject to N6-(pyridoxal phosphate)lysine. Residues 228–232 (GTGGT) and Ser-335 each bind pyridoxal 5'-phosphate.

It belongs to the cysteine synthase/cystathionine beta-synthase family. It depends on pyridoxal 5'-phosphate as a cofactor.

It is found in the mitochondrion. It localises to the mitochondrion outer membrane. The enzyme catalyses O-acetyl-L-serine + hydrogen sulfide = L-cysteine + acetate. Its function is as follows. Putative cysteine synthase that catalyzes the conversion of O-acetyl-L-serine (OAS) into cysteine, the last step in the cysteine biosynthesis pathway. However, in contrast to cysteine synthase cys11, this CS-like protein seems not to function in cysteine biosynthesis, at least under normal growth conditions, although the transcript is produced. The sequence is that of Cysteine synthase 2 (cys12) from Schizosaccharomyces pombe (strain 972 / ATCC 24843) (Fission yeast).